We begin with the raw amino-acid sequence, 68 residues long: DNA gyrase inhibitor YacG (68 aa).

Zn(2+)-binding residues include cysteine 10, cysteine 13, cysteine 29, and cysteine 33. The tract at residues glutamate 45–histidine 68 is disordered. Residues glutamate 53–histidine 68 show a composition bias toward acidic residues.

The protein belongs to the DNA gyrase inhibitor YacG family. Interacts with GyrB. Zn(2+) is required as a cofactor.

Its function is as follows. Inhibits all the catalytic activities of DNA gyrase by preventing its interaction with DNA. Acts by binding directly to the C-terminal domain of GyrB, which probably disrupts DNA binding by the gyrase. The sequence is that of DNA gyrase inhibitor YacG from Yersinia pseudotuberculosis serotype O:1b (strain IP 31758).